Consider the following 288-residue polypeptide: Solute carrier family 25 member 45 (288 aa).

3 Solcar repeats span residues 1-83 (MPVE…TLLA), 97-191 (PSYT…LCRQ), and 199-286 (PSSA…LLRL). A run of 6 helical transmembrane segments spans residues 6–26 (FVAGWISGAVGLVLGHPFDTV), 58–78 (GMSFPIASVALVNSVLFGVYS), 102–122 (IFIAGCTGGLLQAYCLAPFDL), 166–186 (GSWALVLRDTPTLGMYFVTYE), 202–222 (ATVLVAGGFAGIASWITATPF), and 266–286 (SARAFPVNAATFLSYEYLLRL).

This sequence belongs to the mitochondrial carrier (TC 2.A.29) family. As to expression, widely expressed, with highest levels in testis, liver and kidney and low levels in brain, including cortex, cerebellum, hippocampus and hypothalamus, and heart.

The protein resides in the mitochondrion inner membrane. This Mus musculus (Mouse) protein is Solute carrier family 25 member 45 (Slc25a45).